Here is a 354-residue protein sequence, read N- to C-terminus: MPLVAHTDLPTFQRLREEGEEILDPDRASNQDIREMHIGLLNMMPDAALEATERQFFRLVGACNQIVQFHVHPFTIEGLKRSPEAQAHIAKYYESFEQIKRDGLDALIISGANVSHPRLPEEDFWQPLSEVFFWAKENVTSILCSCLATHALIQYCYGIERTRLPAKRWGVFSHKLTDRTHPLVAEINTRFDVPHSRFNEIFQSDMERHGLKVLAVSKEAGVHLAVSPDGFRIVFFQGHPEYDDISLLKEYKREILRFYRAERDDYPPFPENYFNDVVQQILVDYEQRVRSAKQSGQRLEEFPESLILEHIDNTWSDTAKAVFNNWLGKIYQLTHQERGLPFMDGVDPNNPLGL.

The Acyl-thioester intermediate role is filled by Cys146. Residues Lys167 and Ser196 each contribute to the substrate site. The active-site Proton acceptor is His239. Glu241 is an active-site residue. Substrate is bound at residue Arg253.

Belongs to the MetA family.

It localises to the cytoplasm. It carries out the reaction L-homoserine + succinyl-CoA = O-succinyl-L-homoserine + CoA. It functions in the pathway amino-acid biosynthesis; L-methionine biosynthesis via de novo pathway; O-succinyl-L-homoserine from L-homoserine: step 1/1. Functionally, transfers a succinyl group from succinyl-CoA to L-homoserine, forming succinyl-L-homoserine. The chain is Homoserine O-succinyltransferase from Methylobacter tundripaludum (strain ATCC BAA-1195 / DSM 17260 / SV96).